The primary structure comprises 383 residues: MTIPIKESDPITVDVALGERSYDIVIGRGVLPSLGERIAALRPGARVAVVTDARVATHWLQRTEASLTGAGLTTSRIVVDEGEVSKSYAGVEFVCEELIKARIERNDLVVALGGGVVGDLAGFAAAIVRRGVDFVQVPTSLLAQVDSSVGGKTGINSPQGKNLVGAFHQPILVVADTAVLDTLSPRQFRAGYAEVAKYGLIGDEAFFAWLEVHHADIVKGDAAREHAVATSCRAKAAIVARDERESGERALLNLGHTFGHALEAATGFCGRLYHGEGVSIGMVLAAELSAQLGMIAAADVSRIERHLAAAGLPTRLQDIAGFRQEGLADADALMTLMAQDKKVRRGRLTFILLKAIGQAVVSSDVEPSMVRDFLARKLADAPA.

NAD(+)-binding positions include 81-86 (EGEVSK), 115-119 (GVVGD), 139-140 (TS), K152, and K161. Zn(2+) contacts are provided by E194, H256, and H274.

The protein belongs to the sugar phosphate cyclases superfamily. Dehydroquinate synthase family. The cofactor is Co(2+). It depends on Zn(2+) as a cofactor. NAD(+) serves as cofactor.

The protein localises to the cytoplasm. The enzyme catalyses 7-phospho-2-dehydro-3-deoxy-D-arabino-heptonate = 3-dehydroquinate + phosphate. It participates in metabolic intermediate biosynthesis; chorismate biosynthesis; chorismate from D-erythrose 4-phosphate and phosphoenolpyruvate: step 2/7. Functionally, catalyzes the conversion of 3-deoxy-D-arabino-heptulosonate 7-phosphate (DAHP) to dehydroquinate (DHQ). The protein is 3-dehydroquinate synthase of Nitrobacter winogradskyi (strain ATCC 25391 / DSM 10237 / CIP 104748 / NCIMB 11846 / Nb-255).